A 181-amino-acid chain; its full sequence is Methanesulfonate monooxygenase hydroxylase subunit beta (181 aa).

The protein belongs to the bacterial ring-hydroxylating dioxygenase beta subunit family. The MSA monooxygenase system consists of 4 proteins: the 2 subunits of the hydroxylase component (MsmA and MsmB), a ferredoxin (MsmC) and a ferredoxin reductase (MsmD). The hydroxylase component consists of a 3 alpha (MsmA) and 3 beta (MsmB) subunits.

The protein resides in the cytoplasm. It catalyses the reaction methanesulfonate + NADH + O2 = sulfite + formaldehyde + NAD(+) + H2O. With respect to regulation, MSAMO is inhibited by metal chelators (such as bathophenanthroline, bathocuprione, neocuprione, alpha-alpha-dipyridil and sodium EDTA) and by sodium azide, sodium arsenate and potassium cyanide. Functionally, methanesulfonate monooxygenase (MSAMO) mediates the primary degradation of methanesulfonic acid (MSA) to produce formaldehyd and inorganic sulfite by initial hydroxylation of the carbon atom prior to spontaneous cleavage of the unstable hydroxymethanesulfonic acid. MSAMO has a restricted substrate range that includes only the short-chain aliphatic sulfonates (methane- to butanesulfonate) and excludes all larger molecules, such as arylsulfonates and aromatic sulfonates. All MSAMO components are required for enzyme activity. This is Methanesulfonate monooxygenase hydroxylase subunit beta from Methylosulfonomonas methylovora.